We begin with the raw amino-acid sequence, 222 residues long: 7-cyano-7-deazaguanine synthase (222 aa).

An ATP-binding site is contributed by 11–21 (FSGGQDSTTCL). Zn(2+) is bound by residues C187, C195, C198, and C201.

Belongs to the QueC family. Zn(2+) serves as cofactor.

It catalyses the reaction 7-carboxy-7-deazaguanine + NH4(+) + ATP = 7-cyano-7-deazaguanine + ADP + phosphate + H2O + H(+). Its pathway is purine metabolism; 7-cyano-7-deazaguanine biosynthesis. Functionally, catalyzes the ATP-dependent conversion of 7-carboxy-7-deazaguanine (CDG) to 7-cyano-7-deazaguanine (preQ(0)). This Actinobacillus pleuropneumoniae serotype 7 (strain AP76) protein is 7-cyano-7-deazaguanine synthase.